We begin with the raw amino-acid sequence, 203 residues long: MEGAELIIQEINREAEQKIQYILSEAQKEAEKIKEEARKRAEDRAQWILRKAKTQAEMEKQRAIASARLEVRKKRLEVQEEMIRAVLSALRERLASLPADEYFQTLVTLTTEALEELNIDSAVVRSNEETLKLIVEKLPEFKKSVSEKLGKEVEITVGEPISTIGGVLVESSDGSVRVDNTFEARIERLEADLRARIAKALFG.

The protein belongs to the V-ATPase E subunit family. As to quaternary structure, has multiple subunits with at least A(3), B(3), C, D, E, F, H, I and proteolipid K(x).

The protein resides in the cell membrane. Component of the A-type ATP synthase that produces ATP from ADP in the presence of a proton gradient across the membrane. The chain is A-type ATP synthase subunit E from Thermococcus kodakarensis (strain ATCC BAA-918 / JCM 12380 / KOD1) (Pyrococcus kodakaraensis (strain KOD1)).